The following is a 577-amino-acid chain: External alternative NAD(P)H-ubiquinone oxidoreductase B1, mitochondrial (577 aa).

Residues 1–35 (MRGFTYLSKVLHSHSSYSKLLVLCSVSTGGLLVYA) constitute a mitochondrion transit peptide. 57–87 (RVVVLGTGWGGTSFLKDVDISSYDVQVVSPR) lines the FAD pocket. 221–257 (LHFVIVGGGPTGVEFAAELHDYVYEDLVKIYPSVKDF) lines the NAD(+) pocket. The EF-hand domain occupies 378–413 (KVMEDISAIFKAADKDDSGTLSIEEFRDVLEDIIIR). 5 residues coordinate Ca(2+): Asp391, Asp393, Ser395, Thr397, and Glu402. Residues 568-577 (YIFGRDSSRI) carry the Microbody targeting signal motif.

The protein belongs to the NADH dehydrogenase family. Requires FAD as cofactor.

Its subcellular location is the mitochondrion inner membrane. The protein resides in the peroxisome. The enzyme catalyses a quinone + NADH + H(+) = a quinol + NAD(+). It catalyses the reaction a ubiquinone + NADH + H(+) = a ubiquinol + NAD(+). Its activity is regulated as follows. Activity is calcium-dependent with a more pronounced effect at higher pH. In terms of biological role, alternative NADH-ubiquinone oxidoreductase which catalyzes the oxidation of mitochondrial NADH does not translocate protons across the inner mitochondrial membrane. Calcium-dependent NAD(P)H dehydrogenase. Binds calcium ions. The polypeptide is External alternative NAD(P)H-ubiquinone oxidoreductase B1, mitochondrial (NDB1) (Solanum tuberosum (Potato)).